A 224-amino-acid polypeptide reads, in one-letter code: MKSAFTLSLALVAVTATISAAADDNCSFGCLDVYKPVCGSNGETYSNSCYLRLASCKSNNGITEAGDGECASTPASSATPSPVTSSTGSTSGTVGCPDMCLDVYDPVSDENGKEYSNQCYMEMAKCKGTGYDDNKRSGNPGISTLDAERKLAFAPGYQGPPCGDMLCPDNYAPVCGSDGETYPNECDLGITSCNHPEQNITMVGEGPCPSQEQQQQQQQQQQKL.

A signal peptide spans 1–22 (MKSAFTLSLALVAVTATISAAA). Kazal-like domains lie at 23-72 (DDNC…ECAS), 90-127 (TSGTVGCPDMCLDVYDPVSDENGKEYSNQCYMEMAKCK), and 156-210 (GYQG…PCPS). Asparagine 25 carries N-linked (GlcNAc...) asparagine glycosylation. 3 disulfide bridges follow: cysteine 26/cysteine 56, cysteine 30/cysteine 49, and cysteine 38/cysteine 70. The interval 69 to 92 (ECASTPASSATPSPVTSSTGSTSG) is disordered. Over residues 71 to 92 (ASTPASSATPSPVTSSTGSTSG) the composition is skewed to low complexity. 5 cysteine pairs are disulfide-bonded: cysteine 96–cysteine 126, cysteine 100–cysteine 119, cysteine 162–cysteine 193, cysteine 167–cysteine 186, and cysteine 175–cysteine 208. Asparagine 199 is a glycosylation site (N-linked (GlcNAc...) asparagine). The tract at residues 202–224 (MVGEGPCPSQEQQQQQQQQQQKL) is disordered. Low complexity predominate over residues 211-224 (QEQQQQQQQQQQKL).

Interacts with host subtilisin-like protease P69B.

Its subcellular location is the secreted. Secreted effector that interacts with and inhibits the pathogenesis-related P69B subtilisin-like serine protease of host tomato. Inhibition of host proteases by a pathogen extracellular protease inhibitor forms a specific type of defense-counterdefense mechanism between plants and microbial pathogens. The polypeptide is Extracellular protease inhibitor 10 (Phytophthora infestans (Potato late blight agent)).